A 264-amino-acid polypeptide reads, in one-letter code: S-adenosylmethionine decarboxylase proenzyme (264 aa).

S113 (schiff-base intermediate with substrate; via pyruvic acid) is an active-site residue. S113 is modified (pyruvic acid (Ser); by autocatalysis). Catalysis depends on H118, which acts as the Proton acceptor; for processing activity. Catalysis depends on C141, which acts as the Proton donor; for catalytic activity.

It belongs to the prokaryotic AdoMetDC family. Type 2 subfamily. In terms of assembly, heterooctamer of four alpha and four beta chains arranged as a tetramer of alpha/beta heterodimers. Pyruvate serves as cofactor. Is synthesized initially as an inactive proenzyme. Formation of the active enzyme involves a self-maturation process in which the active site pyruvoyl group is generated from an internal serine residue via an autocatalytic post-translational modification. Two non-identical subunits are generated from the proenzyme in this reaction, and the pyruvate is formed at the N-terminus of the alpha chain, which is derived from the carboxyl end of the proenzyme. The post-translation cleavage follows an unusual pathway, termed non-hydrolytic serinolysis, in which the side chain hydroxyl group of the serine supplies its oxygen atom to form the C-terminus of the beta chain, while the remainder of the serine residue undergoes an oxidative deamination to produce ammonia and the pyruvoyl group blocking the N-terminus of the alpha chain.

The enzyme catalyses S-adenosyl-L-methionine + H(+) = S-adenosyl 3-(methylsulfanyl)propylamine + CO2. Its pathway is amine and polyamine biosynthesis; S-adenosylmethioninamine biosynthesis; S-adenosylmethioninamine from S-adenosyl-L-methionine: step 1/1. Its function is as follows. Catalyzes the decarboxylation of S-adenosylmethionine to S-adenosylmethioninamine (dcAdoMet), the propylamine donor required for the synthesis of the polyamines spermine and spermidine from the diamine putrescine. The sequence is that of S-adenosylmethionine decarboxylase proenzyme from Xylella fastidiosa (strain Temecula1 / ATCC 700964).